Here is a 507-residue protein sequence, read N- to C-terminus: Histidine ammonia-lyase (507 aa).

Positions alanine 141–glycine 143 form a cross-link, 5-imidazolinone (Ala-Gly). A 2,3-didehydroalanine (Ser) modification is found at serine 142.

It belongs to the PAL/histidase family. Post-translationally, contains an active site 4-methylidene-imidazol-5-one (MIO), which is formed autocatalytically by cyclization and dehydration of residues Ala-Ser-Gly.

Its subcellular location is the cytoplasm. It carries out the reaction L-histidine = trans-urocanate + NH4(+). Its pathway is amino-acid degradation; L-histidine degradation into L-glutamate; N-formimidoyl-L-glutamate from L-histidine: step 1/3. The sequence is that of Histidine ammonia-lyase from Cereibacter sphaeroides (strain KD131 / KCTC 12085) (Rhodobacter sphaeroides).